The sequence spans 48 residues: uncharacterized protein (48 aa).

Residues 1 to 20 (MLLKNWPSRRIQRDKSKRAG) are disordered.

This is an uncharacterized protein from Bacillus subtilis (strain 168).